Reading from the N-terminus, the 476-residue chain is Glycogen synthase (476 aa).

Position 15 (K15) interacts with ADP-alpha-D-glucose.

The protein belongs to the glycosyltransferase 1 family. Bacterial/plant glycogen synthase subfamily.

It catalyses the reaction [(1-&gt;4)-alpha-D-glucosyl](n) + ADP-alpha-D-glucose = [(1-&gt;4)-alpha-D-glucosyl](n+1) + ADP + H(+). It functions in the pathway glycan biosynthesis; glycogen biosynthesis. In terms of biological role, synthesizes alpha-1,4-glucan chains using ADP-glucose. The polypeptide is Glycogen synthase (Yersinia pseudotuberculosis serotype IB (strain PB1/+)).